A 217-amino-acid chain; its full sequence is ATP synthase subunit 4, mitochondrial (217 aa).

The transit peptide at 1-14 (MPFARVGALSARHY) directs the protein to the mitochondrion. The next 2 helical transmembrane spans lie at 41-61 (GVLA…LYIV) and 66-86 (IVLG…GPGY).

In terms of assembly, F-type ATP synthases have 2 components, the catalytic core F(1) and the membrane-embedded component F(0), linked together by a central stalk and a peripheral stalk. The central stalk, also called rotor shaft, is often seen as part of F(1). The peripheral stalk is seen as part of F(0). F(0) contains the membrane channel next to the rotor. F-type ATP synthases form dimers but each monomer functions independently in ATP generation. The dimer consists of 17 different polypeptides: ATP1 (subunit alpha, 3 molecules per monomer, part of F(1)), ATP2 (subunit beta, 3 copies per monomer, part of F(1)), ATP3 (subunit gamma, part of the central stalk), ATP4 (subunit b, part of the peripheral stalk), ATP5/OSCP (subunit 5/OSCP, part of the peripheral stalk), ATP6 (subunit a, part of the peripheral stalk), ATP7 (subunit d, part of the peripheral stalk), ATP8 (subunit 8, part of the peripheral stalk), OLI1 (subunit c, part of the rotor, 10 molecules per monomer), ATP14 (subunit h, part of the peripheral stalk), ATP15 (subunit epsilon, part of the central stalk), ATP16 (subunit delta, part of the central stalk), ATP17 (subunit f, part of the peripheral stalk), ATP18 (subunit i/j, part of the peripheral stalk), ATP19 (subunit k, dimer-specific, at interface between monomers), ATP20 (subunit g, at interface between monomers), TIM11 (subunit e, at interface between monomers).

The protein localises to the mitochondrion inner membrane. Mitochondrial membrane ATP synthase (F(1)F(0) ATP synthase or Complex V) produces ATP from ADP in the presence of a proton gradient across the membrane which is generated by electron transport complexes of the respiratory chain. F-type ATP synthases consist of two structural domains, F(1) - containing the extramembraneous catalytic core, and F(0) - containing the membrane proton channel, linked together by a central stalk and a peripheral stalk. During catalysis, ATP synthesis in the catalytic domain of F(1) is coupled via a rotary mechanism of the central stalk subunits to proton translocation. Part of the complex F(0) domain and the peripheral stalk, which acts as a stator to hold the catalytic alpha/ATP1(3)beta/ATP2(3) subcomplex and subunit a/ATP6 static relative to the rotary elements. This chain is ATP synthase subunit 4, mitochondrial, found in Yarrowia lipolytica (strain CLIB 122 / E 150) (Yeast).